The following is a 93-amino-acid chain: YcgL domain-containing protein VV1058 (93 aa).

The 84-residue stretch at 1–84 folds into the YcgL domain; that stretch reads MLCSIYKSSK…PPENLLQQHK (84 aa). A disordered region spans residues 74–93; it reads PPPENLLQQHKERKAQQKND.

The chain is YcgL domain-containing protein VV1058 from Vibrio vulnificus (strain YJ016).